A 369-amino-acid chain; its full sequence is UPF0283 membrane protein RPA1583 (369 aa).

The interval 1–61 (MTERVPPRRP…APPPPPPRAR (61 aa)) is disordered. Over residues 34-51 (AKPSAKADARPAASAAGA) the composition is skewed to low complexity. 3 helical membrane-spanning segments follow: residues 90–110 (WGTV…WLWI), 124–144 (LGTI…IIIG), and 239–259 (VSLV…VAIA).

It belongs to the UPF0283 family.

It localises to the cell inner membrane. The protein is UPF0283 membrane protein RPA1583 of Rhodopseudomonas palustris (strain ATCC BAA-98 / CGA009).